The chain runs to 302 residues: Surfeit locus protein 4 homolog (302 aa).

Helical transmembrane passes span 95-115 (APLLLFVCVVLMLVGSTLVVF), 120-140 (AYAIGSLLFVTLLQAFAYGLI), 193-213 (VLLIFMFLGLLAKEGSGISWT), 215-235 (ILVHILSVTACAMVVIGFKAK), 236-256 (FFAAVLVLILSVANFIINSFW), and 271-291 (DFFQTLSIVGGLLYLVNTGPG). Residues 299 to 302 (KKIY) carry the Di-lysine motif motif.

The protein belongs to the SURF4 family.

The protein resides in the endoplasmic reticulum membrane. In Schizosaccharomyces pombe (strain 972 / ATCC 24843) (Fission yeast), this protein is Surfeit locus protein 4 homolog.